The chain runs to 455 residues: MLRFDYLLITALAISTVSVVMAQVPPEKQFRVLNEPGYAPYITEYDASYRFLNSPNQNFFTIPFQLMFYNTTPSAYVLALRVGTRRDMSFTRWIWDANRNNPVGDNSTLSFGRNGNLVLAELNGQVKWQTNTANKGVTGFQILPNGNMVLHDKHGKFVWQSFDHPTDTLLVGQSLKVNGVNKLVSRTSDMNGSDGPYSMVLDNKGLTMYVNKTGTPLVYGGWTDHDFRGTVTFAVTREFDNLTEPSAYELLLEPAPQPATNPGNNRRLLQVRPIGSGGGTLNLNKINYNGTISYLRLGSDGSLKAFSYFPAATYLEWEETFAFFSNYFVRQCGLPTFCGDYGYCDRGMCVGCPTPKGLLAWSDKCAPPKTTQFCSGGKGKAVNYYKIVGVEHFTGPYVNDGQGPTSVNDCKAKCDRDCKCLGYFYKEKDKKCLLAPLLGTLIKDANTSSVAYIKY.

The first 22 residues, 1–22 (MLRFDYLLITALAISTVSVVMA), serve as a signal peptide directing secretion. The Bulb-type lectin domain occupies 43 to 163 (TEYDASYRFL…HGKFVWQSFD (121 aa)). N-linked (GlcNAc...) asparagine glycosylation is found at Asn106, Asn191, Asn211, Asn241, and Asn289. The residue at position 374 (Cys374) is an S-nitrosocysteine. A PAN domain is found at 374–455 (CSGGKGKAVN…NTSSVAYIKY (82 aa)). 2 disulfides stabilise this stretch: Cys410/Cys432 and Cys414/Cys420. N-linked (GlcNAc...) asparagine glycosylation occurs at Asn446.

Its subcellular location is the secreted. It is found in the cell wall. This Arabidopsis thaliana (Mouse-ear cress) protein is EP1-like glycoprotein 1.